The following is an 829-amino-acid chain: Exocyst complex component SEC10b (829 aa).

Positions 244–266 (RGLEVAVANLQDYCNELENRLLS) form a coiled coil.

The protein belongs to the SEC10 family. In terms of assembly, the exocyst complex is composed of SEC3, SEC5, SEC6, SEC8, SEC10, EXO70A1 and EXO84B. Interacts with EXO84B. Binds to EXO70E2. As to expression, expressed in seedlings, roots, leaves and flowers.

Its subcellular location is the cytoplasm. The protein localises to the cytosol. It is found in the secreted. The protein resides in the extracellular exosome. Its function is as follows. Component of the exocyst complex involved in the docking of exocytic vesicles with fusion sites on the plasma membrane during regulated or polarized secretion. Involved in polarized cell growth and organ morphogenesis. During cytokinesis, involved in cell plate initiation, cell plate maturation and formation of new primary cell wall. This is Exocyst complex component SEC10b from Arabidopsis thaliana (Mouse-ear cress).